Reading from the N-terminus, the 559-residue chain is NXPE family member 2 (559 aa).

A helical transmembrane segment spans residues 17–37 (AIARKLLLMLTFILIFWIIYL).

This sequence belongs to the NXPE family.

It is found in the membrane. The polypeptide is NXPE family member 2 (NXPE2) (Homo sapiens (Human)).